Here is a 1479-residue protein sequence, read N- to C-terminus: ABC transporter ecdL (1479 aa).

3 helical membrane-spanning segments follow: residues 32–52 (LLFEESILYLPPLLIAASVAL), 82–102 (LSNAAIAIGFVASPIFAWLSF), and 142–162 (IASIFATIVVCKVVLLVVEAM). N-linked (GlcNAc...) asparagine glycans are attached at residues N183 and N234. 2 helical membrane-spanning segments follow: residues 251–271 (WGGFLPRLCLIGVNYAQPFLV) and 291–311 (SGLIAAYAIVYMGIAVATAAF). Residues 258-535 (LCLIGVNYAQ…FVESLMGLRQ (278 aa)) enclose the ABC transmembrane type-1 1 domain. An N-linked (GlcNAc...) asparagine glycan is attached at N345. Transmembrane regions (helical) follow at residues 365–382 (LHETWASLIEIALSLWLL) and 391–411 (VAAAMVVLVCLLVSGALSGLL). N-linked (GlcNAc...) asparagine glycosylation is present at N427. Helical transmembrane passes span 469 to 489 (LLVALVTLSYLSTTMAPTFAF) and 503 to 523 (PLLAAPAFSSLTIMTLLGQAV). One can recognise an ABC transporter 1 domain in the interval 607–835 (IVLQNHTASW…GSSLRLEELV (229 aa)). N-linked (GlcNAc...) asparagine glycosylation is found at N611 and N628. 641 to 648 (GPIGSGKS) lines the ATP pocket. N793 and N797 each carry an N-linked (GlcNAc...) asparagine glycan. The next 5 helical transmembrane spans lie at 885–905 (TIGWGSWWIFIVLCSGFVVAL), 955–975 (LFAVWSALAITFFLGACLHLM), 1028–1048 (ALIGAVIALILCISAMAVIVY), 1052–1072 (YLAATIPGLLGLLYLVQMFYL), and 1135–1155 (IWLTLTLDIIVAFLAIILVSI). The 262-residue stretch at 932–1193 (IWLKFWTEAN…LVYNWTALEN (262 aa)) folds into the ABC transmembrane type-1 2 domain. N1161 carries an N-linked (GlcNAc...) asparagine glycan. A helical transmembrane segment spans residues 1165 to 1185 (ASIGLALVNLIAFGANMKGLV). Residue N1187 is glycosylated (N-linked (GlcNAc...) asparagine). The 232-residue stretch at 1230–1461 (IKFKSVTASY…RSIFASLLRS (232 aa)) folds into the ABC transporter 2 domain. 1264–1271 (GRTGCGKS) serves as a coordination point for ATP. The segment at 1460-1479 (RSGDEEPGNGHKHESEGEEE) is disordered. The segment covering 1461–1479 (SGDEEPGNGHKHESEGEEE) has biased composition (basic and acidic residues).

It belongs to the ABC transporter superfamily. ABCC family. Conjugate transporter (TC 3.A.1.208) subfamily.

It localises to the cell membrane. Functionally, ABC transporter; part of the gene cluster that mediates the biosynthesis of echinocandin B, a fungal lipidated cyclic hexapeptide that acts as an antifungal agent. The polypeptide is ABC transporter ecdL (Aspergillus rugulosus (Emericella rugulosa)).